Reading from the N-terminus, the 304-residue chain is tRNA dimethylallyltransferase (304 aa).

Position 2 to 9 (2 to 9 (GPTASGKT)) interacts with ATP. Position 4–9 (4–9 (TASGKT)) interacts with substrate. Interaction with substrate tRNA regions lie at residues 27–30 (DSAL), 151–155 (QRINR), 232–237 (RCVGYR), and 265–272 (KRQITWLR).

This sequence belongs to the IPP transferase family. Monomer. It depends on Mg(2+) as a cofactor.

It carries out the reaction adenosine(37) in tRNA + dimethylallyl diphosphate = N(6)-dimethylallyladenosine(37) in tRNA + diphosphate. Catalyzes the transfer of a dimethylallyl group onto the adenine at position 37 in tRNAs that read codons beginning with uridine, leading to the formation of N6-(dimethylallyl)adenosine (i(6)A). In Actinobacillus pleuropneumoniae serotype 5b (strain L20), this protein is tRNA dimethylallyltransferase.